A 310-amino-acid polypeptide reads, in one-letter code: Ribosomal RNA small subunit methyltransferase H (310 aa).

Residues 32–34, D52, F79, D100, and Q107 each bind S-adenosyl-L-methionine; that span reads GGH.

This sequence belongs to the methyltransferase superfamily. RsmH family.

The protein resides in the cytoplasm. The catalysed reaction is cytidine(1402) in 16S rRNA + S-adenosyl-L-methionine = N(4)-methylcytidine(1402) in 16S rRNA + S-adenosyl-L-homocysteine + H(+). Specifically methylates the N4 position of cytidine in position 1402 (C1402) of 16S rRNA. This Bacillus cereus (strain G9842) protein is Ribosomal RNA small subunit methyltransferase H.